The sequence spans 304 residues: Mycothiol acetyltransferase (304 aa).

Residue Glu-36 participates in 1D-myo-inositol 2-(L-cysteinylamino)-2-deoxy-alpha-D-glucopyranoside binding. 73–75 (LFV) provides a ligand contact to acetyl-CoA. Residues 145–304 (LEIQTYTESV…EEHCVWAKSD (160 aa)) form the N-acetyltransferase domain. 1D-myo-inositol 2-(L-cysteinylamino)-2-deoxy-alpha-D-glucopyranoside contacts are provided by Glu-179, Lys-225, and Glu-236. Residue 240-242 (VGL) coordinates acetyl-CoA. Position 274 (Tyr-274) interacts with 1D-myo-inositol 2-(L-cysteinylamino)-2-deoxy-alpha-D-glucopyranoside. 279 to 284 (NDPAVK) contributes to the acetyl-CoA binding site.

Belongs to the acetyltransferase family. MshD subfamily. As to quaternary structure, monomer.

It carries out the reaction 1D-myo-inositol 2-(L-cysteinylamino)-2-deoxy-alpha-D-glucopyranoside + acetyl-CoA = mycothiol + CoA + H(+). Functionally, catalyzes the transfer of acetyl from acetyl-CoA to desacetylmycothiol (Cys-GlcN-Ins) to form mycothiol. This chain is Mycothiol acetyltransferase, found in Corynebacterium aurimucosum (strain ATCC 700975 / DSM 44827 / CIP 107346 / CN-1) (Corynebacterium nigricans).